The following is a 224-amino-acid chain: 25 kDa integral membrane protein (224 aa).

Topologically, residues 1 to 12 (MKLSFTKVSLTN) are cytoplasmic. The helical transmembrane segment at 13-33 (ILILFNCLFIIFSMIVLTFGV) threads the bilayer. The Extracellular segment spans residues 34–52 (IPQIYLLKFANILHGVRPS). A helical transmembrane segment spans residues 53 to 73 (IFPIVCFTGSFVIIVACVGII). Over 74–80 (GLMKGGK) the chain is Cytoplasmic. A helical membrane pass occupies residues 81 to 101 (CLLTMHIIALIIATIIDISTA). At 102–189 (TLSAIKQNEF…LNKYVRYYID (88 aa)) the chain is on the extracellular side. An N-linked (GlcNAc...) asparagine glycan is attached at asparagine 120. A helical transmembrane segment spans residues 190–210 (ILIYLCFIFGFIKLIYSLFTF). Residues 211–224 (TQRQRIFSEKTPVA) are Cytoplasmic-facing.

The protein belongs to the tetraspanin (TM4SF) family.

The protein resides in the membrane. The chain is 25 kDa integral membrane protein from Schistosoma japonicum (Blood fluke).